Reading from the N-terminus, the 132-residue chain is Fatty acid-binding protein 1 (132 aa).

A fatty acid is bound by residues Arg106 and 128–130 (RYY).

This sequence belongs to the calycin superfamily. Fatty-acid binding protein (FABP) family. As to quaternary structure, monomer. In terms of tissue distribution, midgut.

The protein resides in the cytoplasm. In terms of biological role, binds fatty acids in a 1:1 molar ratio. In Manduca sexta (Tobacco hawkmoth), this protein is Fatty acid-binding protein 1 (MFB1).